A 2185-amino-acid polypeptide reads, in one-letter code: Genome polyprotein (2185 aa).

The N-myristoyl glycine; by host moiety is linked to residue Gly2. The Cytoplasmic segment spans residues 2–1495 (GAQVSTQKTG…HVSRAFICLQ (1494 aa)). The segment at 568 to 584 (FFQGPVEDAITAAIGRV) is amphipathic alpha-helix. Catalysis depends on for protease 2A activity residues His872 and Asp890. Positions 907 and 909 each coordinate Zn(2+). Cys961 functions as the For protease 2A activity in the catalytic mechanism. 2 residues coordinate Zn(2+): Cys967 and His969. The membrane-binding stretch occupies residues 1101–1173 (NNSWLKKFTE…EQSAPSQSDQ (73 aa)). The interval 1101 to 1239 (NNSWLKKFTE…SPGAGKSVAT (139 aa)) is oligomerization. An RNA-binding region spans residues 1122 to 1126 (AVKIQ). The SF3 helicase domain maps to 1205–1361 (EKKMSNYIQF…SMYSQNGKIN (157 aa)). Positions 1369, 1381, and 1386 each coordinate Zn(2+). A C4-type; degenerate zinc finger spans residues 1369–1386 (CDDECCPVNFKKCCPLVC). The interval 1413 to 1420 (EYNHRHSV) is RNA-binding. Positions 1424 to 1429 (LEALFQ) are oligomerization. An intramembrane segment occupies 1496-1511 (ALTTFVSVAGIIYIIY). Residues 1512–2185 (KLFAGFQGAY…TLRRKWLDSF (674 aa)) lie on the Cytoplasmic side of the membrane. The residue at position 1521 (Tyr1521) is an O-(5'-phospho-RNA)-tyrosine. Residues 1541 to 1719 (GPAFEFAVAM…FSAALLKHYF (179 aa)) enclose the Peptidase C3 domain. Residues His1580, Glu1611, and Cys1687 each act as for protease 3C activity in the active site. The RdRp catalytic domain maps to 1950-2066 (GHLIAFDYSG…SYPWPIDASL (117 aa)). Residues Asp1956 and Asp2052 each contribute to the Mg(2+) site.

This sequence belongs to the picornaviruses polyprotein family. In terms of assembly, interacts with capsid protein VP1 and capsid protein VP3 to form heterotrimeric protomers. Interacts with capsid protein VP0, and capsid protein VP3 to form heterotrimeric protomers. Five protomers subsequently associate to form pentamers which serve as building blocks for the capsid. Interacts with capsid protein VP2, capsid protein VP3 and capsid protein VP4 following cleavage of capsid protein VP0. Interacts with host CD55. Interacts with host CXADR. As to quaternary structure, interacts with capsid protein VP1 and capsid protein VP3 in the mature capsid. In terms of assembly, interacts with capsid protein VP0 and capsid protein VP1 to form heterotrimeric protomers. Five protomers subsequently associate to form pentamers which serve as building blocks for the capsid. Interacts with capsid protein VP4 in the mature capsid. Interacts with protein 2C; this interaction may be important for virion morphogenesis. Interacts with capsid protein VP1 and capsid protein VP3. As to quaternary structure, homodimer. In terms of assembly, homohexamer; forms a hexameric ring structure with 6-fold symmetry characteristic of AAA+ ATPases. Interacts (via N-terminus) with host RTN3 (via reticulon domain); this interaction is important for viral replication. Interacts with capsid protein VP3; this interaction may be important for virion morphogenesis. Interacts with protein 3CD. As to quaternary structure, homodimer. Interacts with host GBF1. Interacts (via GOLD domain) with host ACBD3 (via GOLD domain); this interaction allows the formation of a viral protein 3A/ACBD3 heterotetramer with a 2:2 stoichiometry, which will stimulate the recruitment of host PI4KB in order to synthesize PI4P at the viral RNA replication sites. In terms of assembly, interacts with RNA-directed RNA polymerase. Interacts with host TICAM1 (via C-terminus). As to quaternary structure, interacts with protein 3AB and with RNA-directed RNA polymerase. In terms of assembly, interacts with Viral protein genome-linked and with protein 3CD. It depends on Mg(2+) as a cofactor. Specific enzymatic cleavages in vivo by the viral proteases yield processing intermediates and the mature proteins. In terms of processing, myristoylation is required for the formation of pentamers during virus assembly. Further assembly of 12 pentamers and a molecule of genomic RNA generates the provirion. Post-translationally, during virion maturation, immature virions are rendered infectious following cleavage of VP0 into VP4 and VP2. This maturation seems to be an autocatalytic event triggered by the presence of RNA in the capsid and it is followed by a conformational change infectious virion. Myristoylation is required during RNA encapsidation and formation of the mature virus particle. In terms of processing, VPg is uridylylated by the polymerase into VPg-pUpU. This acts as a nucleotide-peptide primer for the genomic RNA replication.

It localises to the virion. Its subcellular location is the host cytoplasm. The protein resides in the host cytoplasmic vesicle membrane. The protein localises to the host nucleus. It catalyses the reaction a ribonucleoside 5'-triphosphate + H2O = a ribonucleoside 5'-diphosphate + phosphate + H(+). The catalysed reaction is Selective cleavage of Tyr-|-Gly bond in the picornavirus polyprotein.. The enzyme catalyses RNA(n) + a ribonucleoside 5'-triphosphate = RNA(n+1) + diphosphate. It carries out the reaction Selective cleavage of Gln-|-Gly bond in the poliovirus polyprotein. In other picornavirus reactions Glu may be substituted for Gln, and Ser or Thr for Gly.. With respect to regulation, replication or transcription is subject to high level of random mutations by the nucleotide analog ribavirin. Functionally, forms an icosahedral capsid of pseudo T=3 symmetry with capsid proteins VP2 and VP3. The capsid is 300 Angstroms in diameter, composed of 60 copies of each capsid protein and enclosing the viral positive strand RNA genome. Capsid protein VP1 mainly forms the vertices of the capsid. Capsid protein VP1 interacts with host CD55 and CXADR to provide virion attachment to target host cells. This attachment induces virion internalization. Tyrosine kinases are probably involved in the entry process. After binding to its receptor, the capsid undergoes conformational changes. Capsid protein VP1 N-terminus (that contains an amphipathic alpha-helix) and capsid protein VP4 are externalized. Together, they shape a pore in the host membrane through which viral genome is translocated to host cell cytoplasm. Forms an icosahedral capsid of pseudo T=3 symmetry with capsid proteins VP2 and VP3. The capsid is 300 Angstroms in diameter, composed of 60 copies of each capsid protein and enclosing the viral positive strand RNA genome. In terms of biological role, lies on the inner surface of the capsid shell. After binding to the host receptor, the capsid undergoes conformational changes. Capsid protein VP4 is released, Capsid protein VP1 N-terminus is externalized, and together, they shape a pore in the host membrane through which the viral genome is translocated into the host cell cytoplasm. Its function is as follows. Component of immature procapsids, which is cleaved into capsid proteins VP4 and VP2 after maturation. Allows the capsid to remain inactive before the maturation step. Functionally, cysteine protease that cleaves viral polyprotein and specific host proteins. It is responsible for the autocatalytic cleavage between the P1 and P2 regions, which is the first cleavage occurring in the polyprotein. Also cleaves the host translation initiation factor EIF4G1, in order to shut down the capped cellular mRNA translation. Inhibits the host nucleus-cytoplasm protein and RNA trafficking by cleaving host members of the nuclear pores. Counteracts stress granule formation probably by antagonizing its assembly or promoting its dissassembly. Cleaves and inhibits host IFIH1/MDA5, thereby inhibiting the type-I IFN production and the establishment of the antiviral state. Cleaves and inhibits host MAVS, thereby inhibiting the type-I IFN production and the establishment of the antiviral state. Plays an essential role in the virus replication cycle by acting as a viroporin. Creates a pore in the host endoplasmic reticulum and as a consequence releases Ca2+ in the cytoplasm of infected cell. In turn, high levels of cytoplasmic calcium may trigger membrane trafficking and transport of viral ER-associated proteins to viroplasms, sites of viral genome replication. In terms of biological role, induces and associates with structural rearrangements of intracellular membranes. Displays RNA-binding, nucleotide binding and NTPase activities. May play a role in virion morphogenesis and viral RNA encapsidation by interacting with the capsid protein VP3. Its function is as follows. Localizes the viral replication complex to the surface of membranous vesicles. Together with protein 3CD binds the Cis-Active RNA Element (CRE) which is involved in RNA synthesis initiation. Acts as a cofactor to stimulate the activity of 3D polymerase, maybe through a nucleid acid chaperone activity. Functionally, localizes the viral replication complex to the surface of membranous vesicles. It inhibits host cell endoplasmic reticulum-to-Golgi apparatus transport and causes the disassembly of the Golgi complex, possibly through GBF1 interaction. This would result in depletion of MHC, trail receptors and IFN receptors at the host cell surface. Plays an essential role in viral RNA replication by recruiting ACBD3 and PI4KB at the viral replication sites, thereby allowing the formation of the rearranged membranous structures where viral replication takes place. Acts as a primer for viral RNA replication and remains covalently bound to viral genomic RNA. VPg is uridylylated prior to priming replication into VPg-pUpU. The oriI viral genomic sequence may act as a template for this. The VPg-pUpU is then used as primer on the genomic RNA poly(A) by the RNA-dependent RNA polymerase to replicate the viral genome. During genome replication, the VPg-RNA linkage is removed by the host TDP2, thereby accelerating replication. During the late stage of the replication cycle, host TDP2 is excluded from sites of viral RNA synthesis and encapsidation, allowing for the generation of progeny virions. In terms of biological role, involved in the viral replication complex and viral polypeptide maturation. It exhibits protease activity with a specificity and catalytic efficiency that is different from protease 3C. Protein 3CD lacks polymerase activity. Protein 3CD binds to the 5'UTR of the viral genome. Its function is as follows. Major viral protease that mediates proteolytic processing of the polyprotein. Cleaves host EIF5B, contributing to host translation shutoff. Cleaves also host PABPC1, contributing to host translation shutoff. Cleaves and inhibits host RIGI, thereby inhibiting the type-I IFN production and the establishment of the antiviral state. Cleaves and inhibits host MAVS, thereby inhibiting the type-I IFN production and the establishment of the antiviral state. Cleaves and inhibits host TICAM1/TRIF, thereby inhibiting the type-I IFN production. Cleaves host NLRP1, triggers host N-glycine-mediated degradation of the autoinhibitory NLRP1 N-terminal fragment. Cleaves host transcription factor TFEB, thereby disrupting host lysosomal functions and enhancing viral infection. Functionally, replicates the viral genomic RNA on the surface of intracellular membranes. May form linear arrays of subunits that propagate along a strong head-to-tail interaction called interface-I. Covalently attaches UMP to a tyrosine of VPg, which is used to prime RNA synthesis. The positive stranded RNA genome is first replicated at virus induced membranous vesicles, creating a dsRNA genomic replication form. This dsRNA is then used as template to synthesize positive stranded RNA genomes. ss(+)RNA genomes are either translated, replicated or encapsidated. The polypeptide is Genome polyprotein (Coxsackievirus B3 (strain Nancy)).